The primary structure comprises 270 residues: Phosphatidylinositol transfer protein alpha isoform (270 aa).

A 1,2-diacyl-sn-glycero-3-phospho-(1D-myo-inositol)-binding residues include threonine 58, lysine 60, glutamate 85, asparagine 89, threonine 96, and lysine 194. Lysine 215 is modified (N6-acetyllysine). The span at 250-263 shows a compositional bias: basic and acidic residues; it reads TKRQLDEMRQKDPV. Residues 250–270 form a disordered region; the sequence is TKRQLDEMRQKDPVKGMTADD.

The protein belongs to the PtdIns transfer protein family. PI transfer class I subfamily. Phosphorylated by PKC in a calcium and phosphatidylserine-dependent manner.

It localises to the cytoplasm. It is found in the nucleus. It carries out the reaction a 1,2-diacyl-sn-glycero-3-phosphocholine(in) = a 1,2-diacyl-sn-glycero-3-phosphocholine(out). The enzyme catalyses a 1,2-diacyl-sn-glycero-3-phospho-(1D-myo-inositol)(in) = a 1,2-diacyl-sn-glycero-3-phospho-(1D-myo-inositol)(out). Catalyzes the transfer of phosphatidylinositol (PI) and phosphatidylcholine (PC) between membranes. Shows a preference for PI and PC containing shorter saturated or monosaturated acyl chains at the sn-1 and sn-2 positions. Preference order for PC is C16:1 &gt; C16:0 &gt; C18:1 &gt; C18:0 &gt; C20:4 and for PI is C16:1 &gt; C16:0 &gt; C18:1 &gt; C18:0 &gt; C20:4 &gt; C20:3. The chain is Phosphatidylinositol transfer protein alpha isoform (PITPNA) from Oryctolagus cuniculus (Rabbit).